We begin with the raw amino-acid sequence, 322 residues long: Malate dehydrogenase 1 (322 aa).

NAD(+)-binding positions include 10 to 15 and aspartate 34; that span reads GSGQIG. Arginine 83 and arginine 89 together coordinate substrate. Residues asparagine 96 and 119–121 contribute to the NAD(+) site; that span reads ITN. Substrate contacts are provided by asparagine 121 and arginine 152. Histidine 176 acts as the Proton acceptor in catalysis.

The protein belongs to the LDH/MDH superfamily. MDH type 3 family.

It carries out the reaction (S)-malate + NAD(+) = oxaloacetate + NADH + H(+). Functionally, catalyzes the reversible oxidation of malate to oxaloacetate. This chain is Malate dehydrogenase 1, found in Rhodopseudomonas palustris (strain BisB18).